The primary structure comprises 69 residues: Cap-specific mRNA (nucleoside-2'-O-)-methyltransferase (69 aa).

Residue tyrosine 22 participates in mRNA binding. The S-adenosyl-L-methionine site is built by glutamine 39, tyrosine 66, and glycine 68.

The protein belongs to the class I-like SAM-binding methyltransferase superfamily. Poxvirus/kinetoplastid 2'-O-MTase family. Interacts with poly(A) polymerase catalytic subunit OPG063. Interacts with OPG109 and OPG123; these interactions might help linking transcription to capping and polyadenylation.

Its subcellular location is the virion. It catalyses the reaction a 5'-end (N(7)-methyl 5'-triphosphoguanosine)-ribonucleoside in mRNA + S-adenosyl-L-methionine = a 5'-end (N(7)-methyl 5'-triphosphoguanosine)-(2'-O-methyl-ribonucleoside) in mRNA + S-adenosyl-L-homocysteine + H(+). Functionally, displays methyltransferase, positive regulation of the poly(A) polymerase and transcription elongation activities. Involved in the modification of both mRNA ends and in intermediate and late gene positive transcription elongation. At the mRNAs 5' end, methylates the ribose 2' OH group of the first transcribed nucleotide, thereby producing a 2'-O-methylpurine cap. At the 3' end, functions as a processivity factor which stimulates the activity of the viral poly(A) polymerase OPG063 that creates mRNA's poly(A) tail. In the presence of OPG102, OPG063 does not dissociate from the RNA allowing tail elongation to around 250 adenylates. The polypeptide is Cap-specific mRNA (nucleoside-2'-O-)-methyltransferase (OPG102) (Sus scrofa (Pig)).